We begin with the raw amino-acid sequence, 1081 residues long: MPRRKQEQPKRLPSHVSRQEEAEGELSEGEHWYGNSSETPSEASYGEVQENYKLSLEDRIQEQSTSPDTSLGSTTPSSHTLELVALDSEVLRDSLQCQDHLSPGVSSLCDDDPGSNKPLSSNLRRLLEAGSLKLDAAATANGRVESPVNVGSNLSFSPPSHHAQQLSVLARKLAEKQEQNDQYTPSNRFIWNQGKWLPNSTTTCSLSPDSAILKLKAAANAVLQDKSLTRTEETMRFESFSSPFSSQSASSTLAALSKKVSERSLTPGQEHPPPASSFLSLASMTSSAALLKEVAARAAGSLLAEKSSLLPEDPLPPPPSEKKPEKVTPPPPPPPPPPPPPPPQSLELLLLPVPKGRVSKPSNSASEEESGKPFQCPICGLVIKRKSYWKRHMVIHTGLKSHQCPLCPFRCARKDNLKSHMKVHQHQDRGETFQCQLCPFTSSRHFSLKLHMRCHQHFLRTEAKVKEEIPDPDVKGSPHLSDSACLGQQREGGGTELVGTMMTSNTPERTSQGGAGVSPLLVKEEPKEDNGLPTSFTLNAADRPANHTKLKDPSEYVANSASALFSQDISVKMASDFLMKLSAANQKEPMNLNFKVKEEPKEGESLSTTLPRSSYVFSPESEVSAPGVSEDALKPQEGKGSVLRRDVSVKAASELLMKLSAESYKETQMVKIKEEPMEVDIQDSHVSISPSRNVGYSTLIGREKTEPLQKMPEGRVPPERNLFSQDISVKMASELLFQLSEKVSKEHNHTKENTIRTTTSPFFSEDTFRQSPFTSNSKELLPSDSVLHGRISAPETEKIVLEAGNGLPSWKFNDQLFPCDVCGKVFGRQQTLSRHLSLHTEERKYKCHLCPYAAKCRANLNQHLTVHSVKLVSTDTEDIVSAVTSEGSDGKKHPYYYSCHVCGFETELNVQFVSHMSLHVDKEQWMFSICCTACDFVTMEEAEIKTHIGTKHTGEDRKTPSESNSPSSSSLSALSDSANSKDDSDGSQKNKGGNNLLVISVMPGSQPSLNSEEKPEKGFECVFCNFVCKTKNMFERHLQIHLITRMFECDVCHKFMKTPEQLLEHKKCHTVPTGGLNSGQW.

Residues 1-10 (MPRRKQEQPK) show a composition bias toward basic and acidic residues. The interval 1–14 (MPRRKQEQPKRLPS) is mediates direct interaction with RBBP4. The segment at 1-77 (MPRRKQEQPK…DTSLGSTTPS (77 aa)) is disordered. Residues 3 to 5 (RRK) carry the RRK motif; mediates NuRD recruitment to telomeres motif. The span at 62-77 (EQSTSPDTSLGSTTPS) shows a compositional bias: polar residues. Residues K176, K216, and K226 each participate in a glycyl lysine isopeptide (Lys-Gly) (interchain with G-Cter in SUMO2) cross-link. Disordered stretches follow at residues 259 to 278 (KVSERSLTPGQEHPPPASSF) and 307 to 348 (SSLL…SLEL). Residues 327-344 (VTPPPPPPPPPPPPPPPQ) show a composition bias toward pro residues. Glycyl lysine isopeptide (Lys-Gly) (interchain with G-Cter in SUMO2) cross-links involve residues K360 and K372. C2H2-type zinc fingers lie at residues 374-396 (FQCPICGLVIKRKSYWKRHMVIH), 402-424 (HQCPLCPFRCARKDNLKSHMKVH), and 433-455 (FQCQLCPFTSSRHFSLKLHMRCH). Residues K466, K475, K523, K549, K580, K587, K597, K634, K639, and K658 each participate in a glycyl lysine isopeptide (Lys-Gly) (interchain with G-Cter in SUMO2) cross-link. K673 is covalently cross-linked (Glycyl lysine isopeptide (Lys-Gly) (interchain with G-Cter in SUMO1); alternate). K673 is covalently cross-linked (Glycyl lysine isopeptide (Lys-Gly) (interchain with G-Cter in SUMO2); alternate). Glycyl lysine isopeptide (Lys-Gly) (interchain with G-Cter in SUMO2) cross-links involve residues K704, K710, K742, K778, and K798. 2 consecutive C2H2-type zinc fingers follow at residues 817 to 839 (FPCDVCGKVFGRQQTLSRHLSLH) and 845 to 867 (YKCHLCPYAAKCRANLNQHLTVH). Glycyl lysine isopeptide (Lys-Gly) (interchain with G-Cter in SUMO2) cross-links involve residues K870 and K891. 2 consecutive C2H2-type zinc fingers follow at residues 897 to 919 (YSCHVCGFETELNVQFVSHMSLH) and 929 to 952 (ICCTACDFVTMEEAEIKTHIGTKH). The segment covering 947–960 (HIGTKHTGEDRKTP) has biased composition (basic and acidic residues). A disordered region spans residues 947-996 (HIGTKHTGEDRKTPSESNSPSSSSLSALSDSANSKDDSDGSQKNKGGNNL). K958 is covalently cross-linked (Glycyl lysine isopeptide (Lys-Gly) (interchain with G-Cter in SUMO2)). Residues 961 to 978 (SESNSPSSSSLSALSDSA) are compositionally biased toward low complexity. The segment covering 979 to 988 (NSKDDSDGSQ) has biased composition (basic and acidic residues). K1014 participates in a covalent cross-link: Glycyl lysine isopeptide (Lys-Gly) (interchain with G-Cter in SUMO2). 2 C2H2-type zinc fingers span residues 1019–1041 (FECVFCNFVCKTKNMFERHLQIH) and 1047–1069 (FECDVCHKFMKTPEQLLEHKKCH).

This sequence belongs to the krueppel C2H2-type zinc-finger protein family. Part of a transcription inhibitory ribonucleoprotein complex composed at least of the circular RNA circZNF827, HNRNPK and HNRNPL. Interacts with the nucleosome remodeling and histone deacetylase/NuRD complex. Interacts with RBBP4; the interaction is direct and recruits RBBP4, a component of the NuRD complex, to telomeres.

It localises to the nucleus. The protein resides in the chromosome. Its subcellular location is the telomere. As part of a ribonucleoprotein complex composed at least of HNRNPK, HNRNPL and the circular RNA circZNF827 that nucleates the complex on chromatin, may negatively regulate the transcription of genes involved in neuronal differentiation. Could also recruit the nucleosome remodeling and histone deacetylase/NuRD complex to telomeric regions of chromosomes to regulate chromatin remodeling as part of telomere maintenance. In Homo sapiens (Human), this protein is Zinc finger protein 827 (ZNF827).